We begin with the raw amino-acid sequence, 116 residues long: RutC family protein HI_1627 (116 aa).

The protein belongs to the RutC family.

This is RutC family protein HI_1627 from Haemophilus influenzae (strain ATCC 51907 / DSM 11121 / KW20 / Rd).